The following is a 407-amino-acid chain: Lymphocyte transmembrane adapter 1 (407 aa).

The segment at 1-25 (MYSTPAPPEVTRRNSEPSTRQGTLG) is disordered. Topologically, residues 1 to 33 (MYSTPAPPEVTRRNSEPSTRQGTLGSLQGEKGQ) are extracellular. Positions 16-25 (EPSTRQGTLG) are enriched in polar residues. A helical; Signal-anchor for type III membrane protein membrane pass occupies residues 34–54 (IIFPGFVVLLTIILVIIAACI). Over 55–407 (LWSWKKQKKR…LATETSDEDA (353 aa)) the chain is Cytoplasmic. A disordered region spans residues 109-131 (ESLLSRASDSPEPEAPQANGSLQ). Tyrosine 185, tyrosine 260, tyrosine 286, and tyrosine 353 each carry phosphotyrosine. Positions 331–388 (SAQSEDSAMVHREEQSSEDSSDYETVLVAELEGRDWKQGPGTQHPSDEGTPGDLAGKL) are disordered.

When phosphorylated, interacts with GRB2, PIK3R1 and GRAP2. Phosphorylated on tyrosines upon TCR or BCR activation; which leads to the recruitment of GRB2, PIK3R1 and GRAP2. Expressed in T-cells and B-cells.

The protein resides in the cell membrane. Negatively regulates TCR (T-cell antigen receptor)-mediated signaling in T-cells and BCR (B-cell antigen receptor)-mediated signaling in B-cells. The chain is Lymphocyte transmembrane adapter 1 (Lax1) from Mus musculus (Mouse).